A 529-amino-acid chain; its full sequence is Delayed-rectifier potassium channel regulatory subunit KCNS1 (529 aa).

The Cytoplasmic portion of the chain corresponds to 1–217; the sequence is MLMLLVRGTH…LTMENPGYSL (217 aa). A helical membrane pass occupies residues 218-239; the sequence is PSKLFSCVSISVVLASIAAMCI. The Extracellular segment spans residues 240 to 270; sequence HSLPEYQAREAAAAVAAVAAGRSPEGVRDDP. A helical membrane pass occupies residues 271 to 293; the sequence is VLRRLEYFCIAWFSFEVSSRLLL. The Cytoplasmic segment spans residues 294 to 304; that stretch reads APSTRNFFCHP. A helical membrane pass occupies residues 305-322; the sequence is LNLIDIVSVLPFYLTLLA. The Extracellular portion of the chain corresponds to 323-340; sequence GVALGDQGGTGGKELGHL. The chain crosses the membrane as a helical; Voltage-sensor span at residues 341 to 361; sequence GKVVQVFRLMRIFRVLKLARH. The Cytoplasmic portion of the chain corresponds to 362–376; it reads STGLRSLGATLKHSY. A helical transmembrane segment spans residues 377 to 398; the sequence is REVGILLLYLAVGVSVFSGVAY. The Extracellular portion of the chain corresponds to 399-411; sequence TAEKEEDVGFNTI. Positions 412-423 form an intramembrane region, helical; sequence PACWWWGTVSMT. A Selectivity filter motif is present at residues 424–429; the sequence is TVGYGD. Residues 424–431 lie within the membrane without spanning it; that stretch reads TVGYGDVV. Over 432-438 the chain is Extracellular; it reads PVTVAGK. A helical transmembrane segment spans residues 439–467; the sequence is LAASGCILGGILVVALPITIIFNKFSHFY. Residues 468 to 529 lie on the Cytoplasmic side of the membrane; that stretch reads RRQKALEAAV…PSEPPHPQMY (62 aa). A disordered region spans residues 494–529; it reads GVSEASLETSRETSQEGRSADLETQAPSEPPHPQMY. A compositionally biased stretch (basic and acidic residues) spans 502-514; sequence TSRETSQEGRSAD.

Belongs to the potassium channel family. S (TC 1.A.1.2) subfamily. Kv9.1/KCNS1 sub-subfamily. Heterotetramer with KCNB1. Heterotetramer with KCNB2. Does not form homomultimers.

Its subcellular location is the cell membrane. Functionally, potassium channel regulatory subunit that modulate the delayed rectifier voltage-gated potassium channel activity of KCNB1 and KCNB2 by altering their kinetics, expression levels, and shifting the half-inactivation potential to more polarized values. While it does not form functional channels on its own, it can form functional heterotetrameric channels with KCNB1 and KCNB2. Each regulatory subunit has unique regulatory properties that can lead to extensive inhibition, significant changes in kinetics, and/or substantial shifts in the voltage dependencies of the inactivation process. This is Delayed-rectifier potassium channel regulatory subunit KCNS1 from Chlorocebus aethiops (Green monkey).